The sequence spans 141 residues: Hemoglobin subunit alpha (141 aa).

Residues 1–141 form the Globin domain; that stretch reads VLSPADKSNV…VSTVLTSKYR (141 aa). Serine 3 carries the post-translational modification Phosphoserine. An N6-succinyllysine mark is found at lysine 7 and lysine 11. At lysine 16 the chain carries N6-acetyllysine; alternate. An N6-succinyllysine; alternate modification is found at lysine 16. The residue at position 24 (tyrosine 24) is a Phosphotyrosine. A Phosphoserine modification is found at serine 35. Position 40 is an N6-succinyllysine (lysine 40). Serine 49 is subject to Phosphoserine. Histidine 58 provides a ligand contact to O2. A heme b-binding site is contributed by histidine 87. A Phosphoserine modification is found at serine 102. Threonine 108 is subject to Phosphothreonine. Phosphoserine is present on residues serine 124 and serine 131. 2 positions are modified to phosphothreonine: threonine 134 and threonine 137. Residue serine 138 is modified to Phosphoserine.

Belongs to the globin family. As to quaternary structure, heterotetramer of two alpha chains and two beta chains. In terms of tissue distribution, red blood cells.

Functionally, involved in oxygen transport from the lung to the various peripheral tissues. Its function is as follows. Hemopressin acts as an antagonist peptide of the cannabinoid receptor CNR1. Hemopressin-binding efficiently blocks cannabinoid receptor CNR1 and subsequent signaling. The polypeptide is Hemoglobin subunit alpha (HBA) (Leontocebus fuscicollis (Brown-mantled tamarin)).